A 202-amino-acid chain; its full sequence is IMP cyclohydrolase (202 aa).

This sequence belongs to the archaeal IMP cyclohydrolase family.

It catalyses the reaction IMP + H2O = 5-formamido-1-(5-phospho-D-ribosyl)imidazole-4-carboxamide. Its pathway is purine metabolism; IMP biosynthesis via de novo pathway; IMP from 5-formamido-1-(5-phospho-D-ribosyl)imidazole-4-carboxamide: step 1/1. In terms of biological role, catalyzes the cyclization of 5-formylamidoimidazole-4-carboxamide ribonucleotide to IMP. This Methanosphaera stadtmanae (strain ATCC 43021 / DSM 3091 / JCM 11832 / MCB-3) protein is IMP cyclohydrolase.